A 154-amino-acid polypeptide reads, in one-letter code: 17 kDa surface antigen (154 aa).

Residues 1 to 19 (MKLLSKIMIIALAASMLQA) form the signal peptide. The N-palmitoyl cysteine moiety is linked to residue cysteine 20. Residue cysteine 20 is the site of S-diacylglycerol cysteine attachment.

This sequence belongs to the rickettsiale 17 kDa surface antigen family.

Its subcellular location is the cell outer membrane. This Rickettsia australis protein is 17 kDa surface antigen (omp).